Here is a 238-residue protein sequence, read N- to C-terminus: Bacterial microcompartment shell protein PduB (238 aa).

BMC circularly permuted domains lie at 14-125 (FVGA…VYNA) and 126-225 (KAGH…LSQF). A disulfide bridge connects residues Cys158 and Cys197.

The protein belongs to the EutL/PduB family. As to quaternary structure, homotrimerizes to form a pseudohexamer with a central pore 7.5 Angstroms wide and 22 Angstroms long; the pore channel in the crystal binds up to 4 glycerol molecules. A disulfide bond forms in the pore, it is not clear if this is an artifact. The trimers pack into an array.

The protein localises to the bacterial microcompartment. It functions in the pathway polyol metabolism; 1,2-propanediol degradation. Its function is as follows. One of the major shell proteins of the bacterial microcompartment (BMC) dedicated to 1,2-propanediol (1,2-PD) degradation. Probably involved in a propanediol fermentation/reuterin formation pathway. The chain is Bacterial microcompartment shell protein PduB from Limosilactobacillus reuteri (strain DSM 20016) (Lactobacillus reuteri).